The chain runs to 748 residues: tRNA endonuclease ANKZF1 (748 aa).

The C2H2-type zinc finger occupies 96 to 120; sequence LFCSACDQIFQNHQEQREHYKLDWH. A disordered region spans residues 135 to 185; that stretch reads SASDFEQQSSTGDLSSISGSDDTDSSSEEDLLPLDEGRAESEKPNRPPGFY. The segment covering 143–154 has biased composition (low complexity); that stretch reads SSTGDLSSISGS. A compositionally biased stretch (acidic residues) spans 155–167; the sequence is DDTDSSSEEDLLP. The segment covering 169 to 179 has biased composition (basic and acidic residues); the sequence is DEGRAESEKPN. In terms of domain architecture, VLRF1 spans 227-370; it reads GPRYYVVLMA…QRVLHKLTTL (144 aa). Gln270 is a catalytic residue. Ser282 and Ser385 each carry phosphoserine. Residues 383–408 are compositionally biased toward basic and acidic residues; it reads FHSPETHWKPVREERKKDTEKEKTKV. Disordered stretches follow at residues 383-438 and 460-497; these read FHSP…SEVE and RRRRRKKKERSQEQQCGAHGPLPQQPQDEPFSQPTQEV. Over residues 429 to 438 the composition is skewed to acidic residues; sequence SQEEDGSEVE. Residues 484 to 497 are compositionally biased toward polar residues; sequence QPQDEPFSQPTQEV. The ANK 1 repeat unit spans residues 515–545; sequence ELWDTLLAACRAGEVEVLKLQLATGLVDPGV. Position 555 is a phosphoserine (Ser555). The stretch at 556–585 is one ANK 2 repeat; that stretch reads GGFTLLHAAAAAGRGLVVRLLLEAGADPTV. The segment at 621–677 is disordered; that stretch reads KARVPGPLTQEMEARQATRKKEQKAARRQREQQQRKQREQEEQEQEEQRRFAALSDR. Residues 628–681 are a coiled coil; it reads LTQEMEARQATRKKEQKAARRQREQQQRKQREQEEQEQEEQRRFAALSDREKRA. Thr629 bears the Phosphothreonine mark. A compositionally biased stretch (basic and acidic residues) spans 632-677; sequence MEARQATRKKEQKAARRQREQQQRKQREQEEQEQEEQRRFAALSDR. The tract at residues 654–666 is VCP/p97-interacting motif (VIM); the sequence is QRKQREQEEQEQE. Ser702 carries the post-translational modification Phosphoserine.

This sequence belongs to the ANKZF1/VMS1 family. In terms of assembly, interacts (via VIM motif) with VCP.

The protein localises to the cytoplasm. Functionally, endonuclease that cleaves polypeptidyl-tRNAs downstream of the ribosome-associated quality control (RQC) pathway to release incompletely synthesized polypeptides for degradation. The RQC pathway disassembles aberrantly stalled translation complexes to recycle or degrade the constituent parts. ANKZF1 acts downstream disassembly of stalled ribosomes and specifically cleaves off the terminal 3'-CCA nucleotides universal to all tRNAs from polypeptidyl-tRNAs, releasing (1) ubiquitinated polypeptides from 60S ribosomal subunit for degradation and (2) cleaved tRNAs. ANKZF1-cleaved tRNAs are then repaired and recycled by ELAC1 and TRNT1. Also plays a role in the cellular response to hydrogen peroxide and in the maintenance of mitochondrial integrity under conditions of cellular stress. In Mus musculus (Mouse), this protein is tRNA endonuclease ANKZF1.